A 285-amino-acid polypeptide reads, in one-letter code: UPF0354 protein SA1564 (285 aa).

This sequence belongs to the UPF0354 family.

The chain is UPF0354 protein SA1564 from Staphylococcus aureus (strain N315).